Reading from the N-terminus, the 148-residue chain is Flavodoxin (148 aa).

A Flavodoxin-like domain is found at 4 to 145 (VLIVYGSTTG…DVSAWAGRVV (142 aa)).

It belongs to the flavodoxin family. Requires FMN as cofactor.

Its function is as follows. Low-potential electron donor to a number of redox enzymes. The polypeptide is Flavodoxin (Nitratidesulfovibrio vulgaris (strain DSM 19637 / Miyazaki F) (Desulfovibrio vulgaris)).